Here is a 376-residue protein sequence, read N- to C-terminus: Cinnamyl alcohol dehydrogenase 2 (376 aa).

Position 44 (C44) interacts with Zn(2+). NADP(+) is bound at residue S46. Residues H66, E67, C97, C100, C103, C111, and C161 each coordinate Zn(2+). Residues T165, 187–192 (GLGGLG), 210–215 (SRSSEK), T250, G274, and 297–299 (SQI) each bind NADP(+).

It belongs to the zinc-containing alcohol dehydrogenase family. As to quaternary structure, homodimer. Zn(2+) serves as cofactor. Expressed at the base of the stems.

It catalyses the reaction (E)-cinnamyl alcohol + NADP(+) = (E)-cinnamaldehyde + NADPH + H(+). The enzyme catalyses (E)-coniferol + NADP(+) = (E)-coniferaldehyde + NADPH + H(+). The catalysed reaction is (E)-sinapyl alcohol + NADP(+) = (E)-sinapaldehyde + NADPH + H(+). It carries out the reaction (E)-4-coumaroyl alcohol + NADP(+) = (E)-4-coumaraldehyde + NADPH + H(+). It catalyses the reaction (E)-caffeyl alcohol + NADP(+) = (E)-caffeyl aldehyde + NADPH + H(+). The protein operates within aromatic compound metabolism; phenylpropanoid biosynthesis. Involved in lignin biosynthesis. Catalyzes the final step specific for the production of lignin monomers. Catalyzes the NADPH-dependent reduction of coniferaldehyde, 5-hydroxyconiferaldehyde, sinapaldehyde, 4-coumaraldehyde and caffeyl aldehyde to their respective alcohols. The chain is Cinnamyl alcohol dehydrogenase 2 from Arabidopsis thaliana (Mouse-ear cress).